The chain runs to 84 residues: Polcalcin Ole e 3 (84 aa).

EF-hand domains lie at glutamine 6–serine 40 and valine 41–leucine 76. Residues aspartate 19, asparagine 21, aspartate 23, lysine 25, glutamate 30, aspartate 54, aspartate 56, aspartate 58, and glutamate 65 each coordinate Ca(2+).

In terms of tissue distribution, expressed exclusively in mature pollen.

It is found in the endomembrane system. This is Polcalcin Ole e 3 (OLE3) from Olea europaea (Common olive).